Here is a 91-residue protein sequence, read N- to C-terminus: Small ribosomal subunit protein bS20 (91 aa).

Residues 1–25 form a disordered region; the sequence is MANSPSAKKRAKQAEKRRSHNASLR. The segment covering 7 to 20 has biased composition (basic residues); sequence AKKRAKQAEKRRSH.

Belongs to the bacterial ribosomal protein bS20 family.

Binds directly to 16S ribosomal RNA. In Azotobacter vinelandii (strain DJ / ATCC BAA-1303), this protein is Small ribosomal subunit protein bS20.